The chain runs to 255 residues: Probable transcriptional regulatory protein PCC8801_2028 (255 aa).

Belongs to the TACO1 family.

Its subcellular location is the cytoplasm. The sequence is that of Probable transcriptional regulatory protein PCC8801_2028 from Rippkaea orientalis (strain PCC 8801 / RF-1) (Cyanothece sp. (strain PCC 8801)).